The sequence spans 425 residues: tRNA(Ile)-lysidine synthase (425 aa).

27–32 serves as a coordination point for ATP; it reads SGGLDS.

Belongs to the tRNA(Ile)-lysidine synthase family.

It is found in the cytoplasm. It catalyses the reaction cytidine(34) in tRNA(Ile2) + L-lysine + ATP = lysidine(34) in tRNA(Ile2) + AMP + diphosphate + H(+). Functionally, ligates lysine onto the cytidine present at position 34 of the AUA codon-specific tRNA(Ile) that contains the anticodon CAU, in an ATP-dependent manner. Cytidine is converted to lysidine, thus changing the amino acid specificity of the tRNA from methionine to isoleucine. This chain is tRNA(Ile)-lysidine synthase, found in Streptococcus pneumoniae serotype 2 (strain D39 / NCTC 7466).